The sequence spans 76 residues: Protein OPG128 (76 aa).

Cys17 and Cys21 are disulfide-bonded.

Belongs to the orthopoxvirus OPG128 family. As to quaternary structure, interacts with sulfhydryl oxidase OPG072; this interaction involves formation of a transient disulfide-bonded intermediate, allowing disulfide bond transfer. Interacts with OPG088; this interaction involves formation of a transient disulfide-bonded intermediate, allowing disulfide bond transfer.

In terms of biological role, late protein which probably participates in disulfide bond formation by functioning as a thiol-disulfide transfer protein between membrane-associated OPG072 and OPG08. The complete pathway for formation of disulfide bonds in intracellular virion membrane proteins sequentially involves oxidation of OPG072, OPG128 and OPG08. The chain is Protein OPG128 (OPG128) from Homo sapiens (Human).